An 82-amino-acid polypeptide reads, in one-letter code: Translational regulator CsrA (82 aa).

The protein belongs to the CsrA/RsmA family. Homodimer; the beta-strands of each monomer intercalate to form a hydrophobic core, while the alpha-helices form wings that extend away from the core.

It is found in the cytoplasm. In terms of biological role, a translational regulator that binds mRNA to regulate translation initiation and/or mRNA stability. Usually binds in the 5'-UTR at or near the Shine-Dalgarno sequence preventing ribosome-binding, thus repressing translation. Its main target seems to be the major flagellin gene, while its function is anatagonized by FliW. This chain is Translational regulator CsrA, found in Brachyspira hyodysenteriae (strain ATCC 49526 / WA1).